The sequence spans 680 residues: Viral IRF2-like protein (680 aa).

The segment at residues Ser-7–Met-103 is a DNA-binding region (IRF tryptophan pentad repeat). Disordered stretches follow at residues Ser-156–Glu-201, Glu-220–Thr-257, Glu-343–Ser-365, and Ala-403–Ser-423. Residues Lys-168–Ser-188 are compositionally biased toward low complexity. Residues Glu-191–Asn-200 are compositionally biased toward acidic residues. The segment covering Glu-220 to Asp-240 has biased composition (low complexity).

It belongs to the IRF family. In terms of assembly, interacts with host EIF2AK2/PKR. Interacts with host USP7.

The protein resides in the host nucleus. It localises to the host cytoplasm. Its function is as follows. DNA-binding transcription factor that plays a role in the modulation of host immune response. Acts by interacting with host EIF2AK2/PKR and inhibiting its activation. In turn, EIF2AK2/PKR substrates including EIF2S1 or histone H2A are not phosphorylated. Inhibits type I interferon signaling by targeting host IRF3 during viral reactivation from latency. Attenuates the transcriptional activity of host FOXO3 via activation of the AKT1 signaling pathway, inhibiting FOXO3-mediated apoptosis. Also suppresses the expression of viral early lytic genes in both newly infected and reactivated infected host cells allowing regulation of viral life cycle by harnessing the interferon pathway. Mechanistically, promotes host PML bodies formation as well as host antiviral restriction factors IFIT1-3 expression leading to inhibition of viral early lytic proteins. Also regulates host TRAF3 and TRAF6 ubiquitination by interacting with USP7 deubiquitinase thereby influencing TRAF3/6-mediated signal transduction. The chain is Viral IRF2-like protein (vIRF-2) from Human herpesvirus 8 type P (isolate GK18) (HHV-8).